Here is a 185-residue protein sequence, read N- to C-terminus: Ribosome-recycling factor (185 aa).

This sequence belongs to the RRF family.

Its subcellular location is the cytoplasm. In terms of biological role, responsible for the release of ribosomes from messenger RNA at the termination of protein biosynthesis. May increase the efficiency of translation by recycling ribosomes from one round of translation to another. This is Ribosome-recycling factor from Sulfurovum sp. (strain NBC37-1).